Reading from the N-terminus, the 603-residue chain is MAYFRLYAVLLAVASSVAAVKVNPLPAPRHISWGHSGPKPLSDVSLRTERDTDDSILTNAWNRAWETIVSLEWVPAGIEAPIPEFDEFPTSTPSASAAATRSKRANVPIQFVDVDVEDWDADLQHGVDESYTLDAKAGSDAIDITAKTVWGALHAFTTLQQLVISDGNGGLILEQPVHIKDAPLYPYRGLMVDTGRNFISVRKLHEQLDGMALSKLNVLHWHLDDTQSWPVHIDAYPEMTKDAYSARETYSHDDLRNVVAYARARGIRVIPEIDMPAHSASGWQQVDPDIVACANSWWSNDNWPLHTAVQPNPGQLDIINPKTYEVVQDVYEELSSIFTDDWFHVGGDEIQPNCYNFSTYVTEWFQEDPSRTYNDLMQHWVDKAVPIFRSVSDSRRLVMWEDVVLNTEHADDVPTDIVMQSWNNGLENINKLTERGYDVIVSSADFMYLDCGRGGYVTNDDRYNEQTNPDPDTPSFNYGGIGGSWCGPYKTWQRIYNYDFTLNLTNAQAKHVIGATAPLWSEQVDDVNISNLFWPRAAALAELVWSGNRDAKGNKRTTLFTQRILNFREYLLANGVMAATVVPKYCLQHPHACDLNYDQTVLH.

The N-terminal stretch at 1–19 (MAYFRLYAVLLAVASSVAA) is a signal peptide. Active-site charge relay system residues include Asp225, His278, and Glu349. A disulfide bond links Cys293 and Cys354. A glycan (N-linked (GlcNAc...) asparagine) is linked at Asn356. An intrachain disulfide couples Cys451 to Cys486. Residues Asn503 and Asn528 are each glycosylated (N-linked (GlcNAc...) asparagine). The cysteines at positions 586 and 593 are disulfide-linked.

This sequence belongs to the glycosyl hydrolase 20 family. As to quaternary structure, homodimer.

Its subcellular location is the secreted. The catalysed reaction is Hydrolysis of terminal non-reducing N-acetyl-D-hexosamine residues in N-acetyl-beta-D-hexosaminides.. In terms of biological role, part of the binary chitinolytic system. Involved in hydrolysis of chitobiose and higher chito-oligomers (produced from cell wall chitin by endochitinases), thus contributing to the formation of germ tubes, fruit-bodies and septa during hyphenation. Hydrolyzes synthetic substrates p-nitrophenyl-beta-N-acetyl-glucosamine (pNP-beta-GlcNAc), p-nitrophenyl-beta-N-acetyl-galactosamine (pNP-beta-GalNAc) and 5-bromo-4-chloro-3-indoyl-beta-D-N-glucosaminide (X-GlcNAc). The chain is Beta-hexosaminidase from Emericella nidulans (Aspergillus nidulans).